The chain runs to 495 residues: DNA-directed RNA polymerase subunit alpha (495 aa).

The alpha N-terminal domain (alpha-NTD) stretch occupies residues M1–P301. 2 disordered regions span residues S159–H227 and Q391–T495. The interval P170–T237 is insert. A compositionally biased stretch (basic and acidic residues) spans D172 to S186. Composition is skewed to polar residues over residues V207 to T219 and Q391 to A403. Positions A317–T495 are alpha C-terminal domain (alpha-CTD). Residues R417–R426 are compositionally biased toward basic and acidic residues. Residues R444–A453 show a composition bias toward basic residues. Composition is skewed to polar residues over residues K464–E473 and L486–T495.

It belongs to the RNA polymerase alpha chain family. As to quaternary structure, in plastids the minimal PEP RNA polymerase catalytic core is composed of four subunits: alpha, beta, beta', and beta''. When a (nuclear-encoded) sigma factor is associated with the core the holoenzyme is formed, which can initiate transcription.

The protein resides in the plastid. It localises to the chloroplast. The catalysed reaction is RNA(n) + a ribonucleoside 5'-triphosphate = RNA(n+1) + diphosphate. Its function is as follows. DNA-dependent RNA polymerase catalyzes the transcription of DNA into RNA using the four ribonucleoside triphosphates as substrates. This is DNA-directed RNA polymerase subunit alpha from Nephroselmis olivacea (Green alga).